Here is a 173-residue protein sequence, read N- to C-terminus: MKYGIVIFPPKRIQDFANSYRKRYDSHYALIPPHITLKYPFEADEEQIKKMAKELRRIAAETPPIPIKVTKFSSFYPTSNIIYLKVEPNDVLERLHEQLHSGLFAGKPEFVFVPHITIGRDLPGAEYADVYSQLKLQDVHFEETVDRFHLLYQLENGSWTVYETFIVGGKETV.

Histidine 34 serves as the catalytic Proton donor. Short sequence motifs (HXTX) lie at residues 34-37 and 115-118; these read HITL and HITI. The active-site Proton acceptor is histidine 115.

This sequence belongs to the 2H phosphoesterase superfamily. YjcG family.

The sequence is that of Putative phosphoesterase GK0864 from Geobacillus kaustophilus (strain HTA426).